Consider the following 476-residue polypeptide: Aspartyl/glutamyl-tRNA(Asn/Gln) amidotransferase subunit B 1 (476 aa).

The protein belongs to the GatB/GatE family. GatB subfamily. As to quaternary structure, heterotrimer of A, B and C subunits.

It carries out the reaction L-glutamyl-tRNA(Gln) + L-glutamine + ATP + H2O = L-glutaminyl-tRNA(Gln) + L-glutamate + ADP + phosphate + H(+). The enzyme catalyses L-aspartyl-tRNA(Asn) + L-glutamine + ATP + H2O = L-asparaginyl-tRNA(Asn) + L-glutamate + ADP + phosphate + 2 H(+). In terms of biological role, allows the formation of correctly charged Asn-tRNA(Asn) or Gln-tRNA(Gln) through the transamidation of misacylated Asp-tRNA(Asn) or Glu-tRNA(Gln) in organisms which lack either or both of asparaginyl-tRNA or glutaminyl-tRNA synthetases. The reaction takes place in the presence of glutamine and ATP through an activated phospho-Asp-tRNA(Asn) or phospho-Glu-tRNA(Gln). This chain is Aspartyl/glutamyl-tRNA(Asn/Gln) amidotransferase subunit B 1 (gatB1), found in Clostridium acetobutylicum (strain ATCC 824 / DSM 792 / JCM 1419 / IAM 19013 / LMG 5710 / NBRC 13948 / NRRL B-527 / VKM B-1787 / 2291 / W).